Consider the following 444-residue polypeptide: tRNA (guanine-N(7)-)-methyltransferase non-catalytic subunit TRM82 (444 aa).

WD repeat units follow at residues 1–47 (MSVI…WSDD), 48–99 (FDKI…LGAP), 100–147 (PIYS…KRFC), 148–192 (FSKR…EPIL), 193–237 (GHVS…DKWL), 238–279 (FGHK…STFD), and 308–354 (FAVS…ITFP). Residues 55–92 (RNTTAKEQQGQSSENENENKKLKSNKGDSIKRTAAKVP) are disordered. The segment covering 71-85 (NENKKLKSNKGDSIK) has biased composition (basic and acidic residues). Phosphoserine is present on serine 93.

Belongs to the WD repeat TRM82 family. In terms of assembly, forms a heterodimer with the catalytic subunit TRM8.

The protein resides in the nucleus. Its pathway is tRNA modification; N(7)-methylguanine-tRNA biosynthesis. Its function is as follows. Required for the formation of N(7)-methylguanine at position 46 (m7G46) in tRNA, a modification required to maintain stability of tRNAs; its absence resulting in tRNA decay. In the complex, it is required to stabilize and induce conformational changes of the catalytic subunit. This chain is tRNA (guanine-N(7)-)-methyltransferase non-catalytic subunit TRM82, found in Saccharomyces cerevisiae (strain RM11-1a) (Baker's yeast).